The primary structure comprises 153 residues: Phosphopantetheine adenylyltransferase (153 aa).

Serine 11 is a substrate binding site. ATP-binding positions include 11–12 and histidine 19; that span reads SF. Residues lysine 43, threonine 75, and arginine 89 each contribute to the substrate site. ATP-binding positions include 90-92, glutamate 100, and 124-130; these read GIR and LSFISSS.

It belongs to the bacterial CoaD family. In terms of assembly, homohexamer. Requires Mg(2+) as cofactor.

The protein resides in the cytoplasm. It catalyses the reaction (R)-4'-phosphopantetheine + ATP + H(+) = 3'-dephospho-CoA + diphosphate. The protein operates within cofactor biosynthesis; coenzyme A biosynthesis; CoA from (R)-pantothenate: step 4/5. Its function is as follows. Reversibly transfers an adenylyl group from ATP to 4'-phosphopantetheine, yielding dephospho-CoA (dPCoA) and pyrophosphate. This is Phosphopantetheine adenylyltransferase from Porphyromonas gingivalis (strain ATCC 33277 / DSM 20709 / CIP 103683 / JCM 12257 / NCTC 11834 / 2561).